A 798-amino-acid polypeptide reads, in one-letter code: Nuclear intron maturase 4, mitochondrial (798 aa).

Residues 1 to 16 (MFRKRNLVLDLLRRCY) constitute a mitochondrion transit peptide. The tract at residues 578-665 (VVAPTNAIGR…AAKYRIHENE (88 aa)) is intron maturase type-2. The segment at 729–778 (CFVIGCSMAAPAVYTLHAMERQKFPGWKTGFSVCIPSSLNGRRIGLCKQH) adopts a THAP-type zinc-finger fold.

It belongs to the plant nuclear intron maturase (nMat) family.

It is found in the mitochondrion. It localises to the plastid. The protein resides in the chloroplast. Functionally, nuclear-encoded maturase required for splicing of group-II introns in mitochondria. Involved in NAD1 pre-mRNA processing and maturation of introns 1, 3 and 4. Necessary for mitochondrial biogenesis during early developmental stages. Essential for respiratory holocomplex I biogenesis in mitochondria. This is Nuclear intron maturase 4, mitochondrial from Arabidopsis thaliana (Mouse-ear cress).